The following is a 1004-amino-acid chain: Outer cell wall protein (1004 aa).

An N-terminal signal peptide occupies residues methionine 1 to alanine 24.

The outer cell wall layer is composed of subunits of the outer cell wall protein. These proteins form a hexagonal array with a lattice constant of 14.5 nm in the outer cell wall layers.

Its subcellular location is the secreted. It is found in the cell wall. The protein localises to the S-layer. The outer wall protein binds to the middle cell wall protein. The sequence is that of Outer cell wall protein from Brevibacillus brevis (strain 47 / JCM 6285 / NBRC 100599).